A 231-amino-acid chain; its full sequence is Flagellar L-ring protein (231 aa).

The signal sequence occupies residues 1 to 20; sequence MTYRRIPLYLSCLFLLALSG. C21 carries the N-palmitoyl cysteine lipid modification. A lipid anchor (S-diacylglycerol cysteine) is attached at C21.

The protein belongs to the FlgH family. In terms of assembly, the basal body constitutes a major portion of the flagellar organelle and consists of four rings (L,P,S, and M) mounted on a central rod.

It is found in the cell outer membrane. Its subcellular location is the bacterial flagellum basal body. Assembles around the rod to form the L-ring and probably protects the motor/basal body from shearing forces during rotation. This Desulfotalea psychrophila (strain LSv54 / DSM 12343) protein is Flagellar L-ring protein.